Consider the following 242-residue polypeptide: Biosynthetic peptidoglycan transglycosylase (242 aa).

The chain crosses the membrane as a helical span at residues 19 to 39 (ILAALAVFWGGGIALFSVVPV).

It belongs to the glycosyltransferase 51 family.

It localises to the cell inner membrane. It carries out the reaction [GlcNAc-(1-&gt;4)-Mur2Ac(oyl-L-Ala-gamma-D-Glu-L-Lys-D-Ala-D-Ala)](n)-di-trans,octa-cis-undecaprenyl diphosphate + beta-D-GlcNAc-(1-&gt;4)-Mur2Ac(oyl-L-Ala-gamma-D-Glu-L-Lys-D-Ala-D-Ala)-di-trans,octa-cis-undecaprenyl diphosphate = [GlcNAc-(1-&gt;4)-Mur2Ac(oyl-L-Ala-gamma-D-Glu-L-Lys-D-Ala-D-Ala)](n+1)-di-trans,octa-cis-undecaprenyl diphosphate + di-trans,octa-cis-undecaprenyl diphosphate + H(+). The protein operates within cell wall biogenesis; peptidoglycan biosynthesis. Peptidoglycan polymerase that catalyzes glycan chain elongation from lipid-linked precursors. The chain is Biosynthetic peptidoglycan transglycosylase from Salmonella paratyphi A (strain ATCC 9150 / SARB42).